We begin with the raw amino-acid sequence, 2135 residues long: Plexin-B1 (2135 aa).

An N-terminal signal peptide occupies residues 1–19 (MPALGPALLQALWAGWVLT). The 460-residue stretch at 20-479 (LQPLPPTAFT…TQSTLLKVPV (460 aa)) folds into the Sema domain. The Extracellular portion of the chain corresponds to 20–1490 (LQPLPPTAFT…SPGAFPVAAQ (1471 aa)). N-linked (GlcNAc...) asparagine glycosylation is present at N31. Intrachain disulfides connect C79–C88, C111–C119, C252–C377, C268–C322, C340–C364, C482–C499, C488–C533, C491–C508, and C502–C514. An N-linked (GlcNAc...) asparagine glycan is attached at N334. N543 carries N-linked (GlcNAc...) asparagine glycosylation. C570 and C588 are joined by a disulfide. Disordered regions lie at residues 671 to 829 (MVAS…TTFP) and 849 to 884 (LPEA…PPAP). Over residues 681 to 697 (SPDPPARGGPSPSPPTA) the composition is skewed to pro residues. Composition is skewed to low complexity over residues 698-710 (PKAL…DTLP) and 734-754 (SPWG…TGSP). IPT/TIG domains are found at residues 1070-1160 (PLIH…FAYQ), 1162-1249 (PKVH…FKYT), and 1252-1375 (PNIT…FSYE). 3 N-linked (GlcNAc...) asparagine glycosylation sites follow: N1183, N1253, and N1330. The chain crosses the membrane as a helical span at residues 1491–1511 (VGLGVGTSLLALGVIIIVLMY). Residues 1507–1539 (IVLMYRRKSKQALRDYKKVQIQLENLESSVRDR) are a coiled coil. The Cytoplasmic portion of the chain corresponds to 1512–2135 (RRKSKQALRD…AAVENKVTDL (624 aa)). Positions 1883 to 1908 (PWHLVKPSDEPEPPRPRRGSLRGGER) are disordered. A compositionally biased stretch (basic and acidic residues) spans 1888-1897 (KPSDEPEPPR).

The protein belongs to the plexin family. As to quaternary structure, monomer, and heterodimer with PLXNB2 after proteolytic processing. Binds RAC1 that has been activated by GTP binding. Interaction with SEMA4D promotes binding of cytoplasmic ligands. Interacts with PLXNA1. Interacts with ARHGEF11 and ARHGEF12. Interacts with ERBB2. Interacts with MET. Interacts with MST1R. Interacts with RRAS. Interacts with RHOD. Interacts with RND1. Interacts with NRP1 and NRP2. Post-translationally, phosphorylated on tyrosine residues by ERBB2 and MET upon SEMA4D binding. In terms of processing, proteolytic processing favors heterodimerization with PLXNB2 and SEMA4D binding. As to expression, highly expressed in fetal kidney, and at slightly lower levels in fetal brain, lung and liver.

The protein resides in the cell membrane. The protein localises to the secreted. In terms of biological role, receptor for SEMA4D. Plays a role in GABAergic synapse development. Mediates SEMA4A- and SEMA4D-dependent inhibitory synapse development. Plays a role in RHOA activation and subsequent changes of the actin cytoskeleton. Plays a role in axon guidance, invasive growth and cell migration. This is Plexin-B1 (PLXNB1) from Homo sapiens (Human).